A 406-amino-acid chain; its full sequence is High mobility group nucleosome-binding domain-containing protein 5 (406 aa).

The disordered stretch occupies residues 1–406 (MPKRKAAGDV…GEKEEPLSIV (406 aa)). Phosphothreonine is present on T29. Residues 35–44 (KRASTSRKTK) are compositionally biased toward basic residues. Basic and acidic residues-rich tracts occupy residues 63–72 (TKPEDVKDEC), 92–101 (MEAEEVKEQI), 110–126 (GEKKEAVAAEAKDDELK), 136–159 (EDGKEHKDTGEEVEDGKIEEEGLN), and 166–187 (KSEDAEVSKDEEEKGDNEKGED). Residue K64 forms a Glycyl lysine isopeptide (Lys-Gly) (interchain with G-Cter in SUMO2) linkage. A Glycyl lysine isopeptide (Lys-Gly) (interchain with G-Cter in SUMO1); alternate cross-link involves residue K98. K98 is covalently cross-linked (Glycyl lysine isopeptide (Lys-Gly) (interchain with G-Cter in SUMO2); alternate). A Glycyl lysine isopeptide (Lys-Gly) (interchain with G-Cter in SUMO2) cross-link involves residue K121. Over residues 188-200 (GKEEGDEKEEEKD) the composition is skewed to acidic residues. Composition is skewed to basic and acidic residues over residues 201–239 (DKEGDTGTEKEVKEQNKEAEEDDGKCKEEENKEVGKEGQ), 246–266 (EDLHEEVGKEDLHEEDGKEGQ), 272–284 (KEIHHEEDGKEGQ), and 290–311 (KEYLHEEDGEEGQPKEDQKEGQ). The segment covering 312–325 (PEEDGKEDQPEEDG) has biased composition (acidic residues). The segment covering 326–365 (KEGQCKEDGKEGHHEEGGKEDLHEEDGKEKDGGKEDRKEE) has biased composition (basic and acidic residues). A compositionally biased stretch (acidic residues) spans 366 to 376 (GEQEVAVDEGS). Positions 377 to 406 (DENKVEAEEEGAENKDFKQDGEKEEPLSIV) are enriched in basic and acidic residues.

It belongs to the HMGN family. In terms of tissue distribution, expressed in liver, spleen, lung, heart, kidney, muscle and brain (at protein level). Widely expressed with highest levels in submaxillary gland, thymus, kidney and liver and lowest levels in brain, lung, pancreas and eye.

Its subcellular location is the nucleus. Preferentially binds to euchromatin and modulates cellular transcription by counteracting linker histone-mediated chromatin compaction. This is High mobility group nucleosome-binding domain-containing protein 5 (Hmgn5) from Mus musculus (Mouse).